Consider the following 245-residue polypeptide: MGGQKTHFGFSTVNEDEKAGKVAEVFHSVAKNYDIMNDVMSAGLHRVWKHFTINTAHLKKGDKVLDIAGGTGDLSRGWAKRVGKEGEVWLTDINSSMLTVGRDCLLNEGMILPVSLADAEKLPFPDNYFNLVSVAFGLRNMTHKDTALKEMCRVLKPGGTLLVLEFSKIYKPLEGAYDFYSFKLLPVMGKLIAKDAESYQYLAESIRMHPDQETLKQMMLDAGFDSVDYHNMSAGIVALHKGVKF.

Residues T71, D92, and 118-119 (DA) contribute to the S-adenosyl-L-methionine site.

The protein belongs to the class I-like SAM-binding methyltransferase superfamily. MenG/UbiE family.

The enzyme catalyses a 2-demethylmenaquinol + S-adenosyl-L-methionine = a menaquinol + S-adenosyl-L-homocysteine + H(+). It catalyses the reaction a 2-methoxy-6-(all-trans-polyprenyl)benzene-1,4-diol + S-adenosyl-L-methionine = a 5-methoxy-2-methyl-3-(all-trans-polyprenyl)benzene-1,4-diol + S-adenosyl-L-homocysteine + H(+). Its pathway is quinol/quinone metabolism; menaquinone biosynthesis; menaquinol from 1,4-dihydroxy-2-naphthoate: step 2/2. It participates in cofactor biosynthesis; ubiquinone biosynthesis. Methyltransferase required for the conversion of demethylmenaquinol (DMKH2) to menaquinol (MKH2) and the conversion of 2-polyprenyl-6-methoxy-1,4-benzoquinol (DDMQH2) to 2-polyprenyl-3-methyl-6-methoxy-1,4-benzoquinol (DMQH2). The chain is Ubiquinone/menaquinone biosynthesis C-methyltransferase UbiE from Neisseria meningitidis serogroup C (strain 053442).